The chain runs to 788 residues: Endonuclease MutS2 (788 aa).

Residue 332 to 339 (GPNTGGKT) coordinates ATP. Positions 713–788 (VDLRGMDAEE…GTGVTVVELK (76 aa)) constitute a Smr domain.

The protein belongs to the DNA mismatch repair MutS family. MutS2 subfamily. In terms of assembly, homodimer. Binds to stalled ribosomes, contacting rRNA.

In terms of biological role, endonuclease that is involved in the suppression of homologous recombination and thus may have a key role in the control of bacterial genetic diversity. Acts as a ribosome collision sensor, splitting the ribosome into its 2 subunits. Detects stalled/collided 70S ribosomes which it binds and splits by an ATP-hydrolysis driven conformational change. Acts upstream of the ribosome quality control system (RQC), a ribosome-associated complex that mediates the extraction of incompletely synthesized nascent chains from stalled ribosomes and their subsequent degradation. Probably generates substrates for RQC. In Clostridium botulinum (strain Okra / Type B1), this protein is Endonuclease MutS2.